The primary structure comprises 226 residues: Phosphoribosylformylglycinamidine synthase subunit PurQ (226 aa).

The 224-residue stretch at 3–226 (RVAVIRFPGT…FESLVEWCRS (224 aa)) folds into the Glutamine amidotransferase type-1 domain. Cys-86 functions as the Nucleophile in the catalytic mechanism. Catalysis depends on residues His-199 and Glu-201.

In terms of assembly, part of the FGAM synthase complex composed of 1 PurL, 1 PurQ and 2 PurS subunits.

The protein localises to the cytoplasm. The enzyme catalyses N(2)-formyl-N(1)-(5-phospho-beta-D-ribosyl)glycinamide + L-glutamine + ATP + H2O = 2-formamido-N(1)-(5-O-phospho-beta-D-ribosyl)acetamidine + L-glutamate + ADP + phosphate + H(+). The catalysed reaction is L-glutamine + H2O = L-glutamate + NH4(+). The protein operates within purine metabolism; IMP biosynthesis via de novo pathway; 5-amino-1-(5-phospho-D-ribosyl)imidazole from N(2)-formyl-N(1)-(5-phospho-D-ribosyl)glycinamide: step 1/2. Part of the phosphoribosylformylglycinamidine synthase complex involved in the purines biosynthetic pathway. Catalyzes the ATP-dependent conversion of formylglycinamide ribonucleotide (FGAR) and glutamine to yield formylglycinamidine ribonucleotide (FGAM) and glutamate. The FGAM synthase complex is composed of three subunits. PurQ produces an ammonia molecule by converting glutamine to glutamate. PurL transfers the ammonia molecule to FGAR to form FGAM in an ATP-dependent manner. PurS interacts with PurQ and PurL and is thought to assist in the transfer of the ammonia molecule from PurQ to PurL. The chain is Phosphoribosylformylglycinamidine synthase subunit PurQ from Methanopyrus kandleri (strain AV19 / DSM 6324 / JCM 9639 / NBRC 100938).